The primary structure comprises 595 residues: METIRNFSIIAHVDHGKSTISDRLIQICGGLSKREMHSQVLDSMDLEKERGITIKSQSVTIEYKSKCNKIIQMNFIDTPGHVDFSYEVSRSLSACEGALLIIDATQGVEAQTIANCHTALDMNLKVIPILNKIDLPTADPQRVKKEIEDIIGLSTNNIILCSAKTGTGITNLLETITHNIPYPKGNPNDPLQALIIDSWFDCYLGVVSLVRVKNGYLTKKTKIQIMSTKKIYNIEKIGIFTPKPIFKDILKCGEVGWIICGIRNITGAPVGDTITQHPNSAKKVLSGFKKIKPKIYAGLFTIQSNQFSLFRDALGKLSLNDASLFYEPEHSLALGHGFRCGFLGILHMEIVQARLEREYNLQIIATSPTVIYKIIMIDNTNYYLDTPHKLSTLQKIKEIREPIAKCLILLPIKYLGNTLLLCSQRRGVQNDISYYNNQILLDYSIPMSEVVLNFFDQLKSVSSGYASLEYNFELYKVAHVKCLDILVNYKKIDSLSTIVHKTKILNQAKNVVEKMKNLIPRHQFDIIIQAVIGTKVIVRTTIKQLRKNVLAKCYGGDVTRKKKLLKKQKIGKKRMKQIGNITIPQEVFLKILNNN.

The region spanning 2 to 184 is the tr-type G domain; the sequence is ETIRNFSIIA…TITHNIPYPK (183 aa). Residues 14–19 and 131–134 contribute to the GTP site; these read DHGKST and NKID.

The protein belongs to the TRAFAC class translation factor GTPase superfamily. Classic translation factor GTPase family. LepA subfamily.

The protein resides in the cell membrane. The enzyme catalyses GTP + H2O = GDP + phosphate + H(+). Required for accurate and efficient protein synthesis under certain stress conditions. May act as a fidelity factor of the translation reaction, by catalyzing a one-codon backward translocation of tRNAs on improperly translocated ribosomes. Back-translocation proceeds from a post-translocation (POST) complex to a pre-translocation (PRE) complex, thus giving elongation factor G a second chance to translocate the tRNAs correctly. Binds to ribosomes in a GTP-dependent manner. This Buchnera aphidicola subsp. Baizongia pistaciae (strain Bp) protein is Elongation factor 4.